A 148-amino-acid polypeptide reads, in one-letter code: Probable histone H2B.2 (148 aa).

The span at 1 to 32 (MAPKGEKKPAEKKPAEEKKSTVAEKAPAEKKP) shows a compositional bias: basic and acidic residues. The segment at 1–57 (MAPKGEKKPAEKKPAEEKKSTVAEKAPAEKKPKAGKKLPKEGGSAAGEKKKKRSKKS) is disordered. An N6-acetyllysine mark is found at lysine 7, lysine 36, and lysine 37. Lysine 144 participates in a covalent cross-link: Glycyl lysine isopeptide (Lys-Gly) (interchain with G-Cter in ubiquitin).

Belongs to the histone H2B family. As to quaternary structure, the nucleosome is a histone octamer containing two molecules each of H2A, H2B, H3 and H4 assembled in one H3-H4 heterotetramer and two H2A-H2B heterodimers. The octamer wraps approximately 147 bp of DNA. Can be acetylated to form H2BK6ac, H2BK33ac and H2BK34ac. Post-translationally, monoubiquitinated to form H2BK143ub1; may give a specific tag for epigenetic transcriptional activation.

The protein localises to the nucleus. It is found in the chromosome. Core component of nucleosome. Nucleosomes wrap and compact DNA into chromatin, limiting DNA accessibility to the cellular machineries which require DNA as a template. Histones thereby play a central role in transcription regulation, DNA repair, DNA replication and chromosomal stability. DNA accessibility is regulated via a complex set of post-translational modifications of histones, also called histone code, and nucleosome remodeling. The sequence is that of Probable histone H2B.2 from Medicago truncatula (Barrel medic).